The primary structure comprises 129 residues: RxLR effector protein SFI6 (129 aa).

A signal peptide spans 1–16 (MTLVVLATGLLASGTA). Residues 42-64 (RFLRSHQITDDKVEINEHGEEER) carry the RxLR-dEER motif.

The protein belongs to the RxLR effector family.

It localises to the secreted. Its subcellular location is the host cytoplasm. It is found in the host cell membrane. Effector that suppresses flg22-induced post-translational MAP kinase activation in tomato but not in Arabidopsis. The perception of highly conserved pathogen- or microbe-associated molecular patterns (PAMPs/MAMPs), such as flg22, triggers converging signaling pathways recruiting MAP kinase cascades and inducing transcriptional re-programming, yielding a generic antimicrobial response. This is RxLR effector protein SFI6 from Phytophthora infestans (strain T30-4) (Potato late blight agent).